The chain runs to 423 residues: Adenylosuccinate synthetase (423 aa).

Asp-12 (proton acceptor) is an active-site residue. 2 residues coordinate Mg(2+): Asp-12 and Gly-39. Residues 37–40 (NAGH), Thr-129, Arg-143, Asn-221, Thr-236, and Arg-300 each bind IMP. 39–41 (GHS) lines the GTP pocket. Catalysis depends on His-40, which acts as the Proton donor. 296–302 (VSTGRKR) contacts substrate. GTP-binding positions include Arg-302, 328–330 (KLD), and 412–414 (GTG).

The protein belongs to the adenylosuccinate synthetase family. In terms of assembly, homodimer. Requires Mg(2+) as cofactor.

The protein resides in the cytoplasm. The enzyme catalyses IMP + L-aspartate + GTP = N(6)-(1,2-dicarboxyethyl)-AMP + GDP + phosphate + 2 H(+). It functions in the pathway purine metabolism; AMP biosynthesis via de novo pathway; AMP from IMP: step 1/2. Its function is as follows. Plays an important role in the de novo pathway and in the salvage pathway of purine nucleotide biosynthesis. Catalyzes the first committed step in the biosynthesis of AMP from IMP. This chain is Adenylosuccinate synthetase, found in Pyricularia oryzae (strain 70-15 / ATCC MYA-4617 / FGSC 8958) (Rice blast fungus).